Consider the following 585-residue polypeptide: Probable monoterpene synthase MTS1, chloroplastic (585 aa).

Residues 1–29 (MSLSGVPLSAGLAPSPSNKPTNGKGQNIV) are disordered. A chloroplast-targeting transit peptide spans 1-31 (MSLSGVPLSAGLAPSPSNKPTNGKGQNIVRR). A compositionally biased stretch (polar residues) spans 15 to 25 (SPSNKPTNGKG). (2E)-geranyl diphosphate contacts are provided by arginine 298, aspartate 335, aspartate 339, arginine 476, and aspartate 479. 2 residues coordinate Mg(2+): aspartate 335 and aspartate 339. The short motif at 335–339 (DDIYD) is the DDXXD motif element. Aspartate 479, threonine 483, and glutamate 487 together coordinate Mg(2+).

Belongs to the terpene synthase family. Tpsb subfamily. It depends on Mg(2+) as a cofactor. The cofactor is Mn(2+). In terms of tissue distribution, expressed in trichomes. Detected in flowers, but not in leaves.

Its subcellular location is the plastid. It localises to the chloroplast. The protein is Probable monoterpene synthase MTS1, chloroplastic of Humulus lupulus (European hop).